The sequence spans 401 residues: Adenosine 3'-phospho 5'-phosphosulfate transporter 2 (401 aa).

Residues Asn-12 and Asn-71 are each glycosylated (N-linked (GlcNAc...) asparagine). Transmembrane regions (helical) follow at residues 78-98 (LTQF…YGYL), 114-134 (YLTL…LQLI), 147-167 (MIIA…LGYL), 170-190 (PTQV…GVFI), 196-216 (NVAD…FTLA), and 223-243 (NFNL…AVIG). Asn-254 is a glycosylation site (N-linked (GlcNAc...) asparagine). A run of 4 helical transmembrane segments spans residues 267-287 (IGFV…PAVT), 298-317 (GYAF…VLAL), 324-346 (LIAV…IFFA), and 349-369 (FTFQ…LNVY).

It belongs to the nucleotide-sugar transporter family. SLC35B subfamily. As to expression, preferentially and highly expressed in colon.

Its subcellular location is the golgi apparatus membrane. It catalyses the reaction 3'-phosphoadenylyl sulfate(in) + adenosine 3',5'-bisphosphate(out) = 3'-phosphoadenylyl sulfate(out) + adenosine 3',5'-bisphosphate(in). Its function is as follows. Probably functions as a 3'-phosphoadenylyl sulfate:adenosine 3',5'-bisphosphate antiporter at the Golgi membranes. Mediates the transport from the cytosol into the lumen of the Golgi of 3'-phosphoadenylyl sulfate/adenosine 3'-phospho 5'-phosphosulfate (PAPS), a universal sulfuryl donor for sulfation events that take place in that compartment. The protein is Adenosine 3'-phospho 5'-phosphosulfate transporter 2 of Homo sapiens (Human).